The primary structure comprises 102 residues: PE family immunomodulator PE5 (102 aa).

Residues 3 to 92 form the PE domain; it reads LRVVPEGLAA…GASYLAGDAA (90 aa).

The protein belongs to the mycobacterial PE family.

The protein localises to the secreted. Its subcellular location is the cell envelope. The protein resides in the cell surface. Important for the siderophore-mediated iron-acquisition function of ESX-3. May play a pivotal role in the evasion of host immune response by M.tuberculosis. Mediates production of IL-10 via activation of the p38 and ERK1/2 mitogen-activated protein kinase (MAPK) signaling pathways. The polypeptide is PE family immunomodulator PE5 (Mycobacterium tuberculosis (strain ATCC 25618 / H37Rv)).